Reading from the N-terminus, the 647-residue chain is Cartilage acidic protein 1 (647 aa).

Positions 1–30 are cleaved as a signal peptide; sequence MMLPADFFVPVSKMMLLALLLSIIICCGGA. One copy of the FG-GAP 1; atypical repeat lies at 48 to 90; it reads DYDSNPTQLNYGVAITDVDNDGDFEVVVAGYNGPNLVLKYIKE. The FG-GAP 2; atypical repeat unit spans residues 107–149; it reads YALRDRQGNAIGVAACDIDGDGREEIYFLNTNNAFSGIATYSD. The stretch at 285-335 is one FG-GAP 3; atypical repeat; sequence TGVDDVYQHGRGVALADFNRDGKVDIVYGNWNGPHRLFLQMNTNGKVRFRD. Residues 397 to 439 form an FG-GAP 4; atypical repeat; it reads GDASEPDGRGTGGAVTDFDGDGMLDLILSHGESMAQPLSVFKG. Residues 561–607 enclose the EGF-like domain; sequence DTDECIQFPFVCPREKPVCINTYGGYKCRPNRRCSRGFEPNEDGTAC. 3 disulfide bridges follow: cysteine 565/cysteine 579, cysteine 572/cysteine 588, and cysteine 594/cysteine 607.

The protein localises to the secreted. The protein resides in the extracellular space. Its subcellular location is the extracellular matrix. In Xenopus tropicalis (Western clawed frog), this protein is Cartilage acidic protein 1 (crtac1).